The chain runs to 1463 residues: MEPRLFCWTTLFLLAGWCLPGLPCPSRCLCFKSTVRCMHLMLDHIPQVPQQTTVLDLRFNRIREIPGSAFKKLKNLNTLLLNNNHIRKISRNAFEGLENLLYLYLYKNEIHALDKQTFKGLISLEHLYIHFNQLEMLQPETFGDLLRLERLFLHNNKLSKIPAGSFSNLDSLKRLRLDSNALVCDCDLMWLGELLQGFAQHGHTQAAATCEYPRRLHGRAVASVTVEEFNCQSPRITFEPQDVEVPSGNTVYFTCRAEGNPKPEIIWIHNNHSLDLEDDTRLNVFDDGTLMIRNTRESDQGVYQCMARNSAGEAKTQSAMLRYSSLPAKPSFVIQPQDTEVLIGTSTTLECMATGHPHPLITWTRDNGLELDGSRHVATSSGLYLQNITQRDHGRFTCHANNSHGTVQAAANIIVQAPPQFTVTPKDQVVLEEHAVEWLCEADGNPPPVIVWTKTGGQLPVEGQHTVLSSGTLRIDRAAQHDQGQYECQAVSSLGVKKVSVQLTVKPKALAVFTQLPQDTSVEVGKNINISCHAQGEPQPIITWNKEGVQITESGKFHVDDEGTLTIYDAGFPDQGRYECVARNSFGLAVTNMFLTVTAIQGRQAGDDFVESSILDAVQRVDSAINSTRRHLFSQKPHTSSDLLAQFHYPRDPLIVEMARAGEIFEHTLQLIRERVKQGLTVDLEGKEFRYNDLVSPRSLSLIANLSGCTARRPLPNCSNRCFHAKYRAHDGTCNNLQQPTWGAALTAFARLLQPAYRDGIRAPRGLGLPVGSRQPLPPPRLVATVWARAAAVTPDHSYTRMLMHWGWFLEHDLDHTVPALSTARFSDGRPCSSVCTNDPPCFPMNTRHADPRGTHAPCMLFARSSPACASGRPSATVDSVYAREQINQQTAYIDGSNVYGSSERESQALRDPSVPRGLLKTGFPWPPSGKPLLPFSTGPPTECARQEQESPCFLAGDHRANEHLALAAMHTLWFREHNRMATELSALNPHWEGNTVYQEARKIVGAELQHITYSHWLPKVLGDPGTRMLRGYRGYNPNVNAGIINSFATAAFRFGHTLINPILYRLNATLGEISEGHLPFHKALFSPSRIIKEGGIDPVLRGLFGVAAKWRAPSYLLSPELTQRLFSAAYSAAVDSAATIIQRGRDHGIPPYVDFRVFCNLTSVKNFEDLQNEIKDSEIRQKLRKLYGSPGDIDLWPALMVEDLIPGTRVGPTLMCLFVTQFQRLRDGDRFWYENPGVFTPAQLTQLKQASLSRVLCDNGDSIQQVQADVFVKAEYPQDYLNCSEIPKVDLRVWQDCCADCRSRGQFRAVTQESQKKRSAQYSYPVDKDMELSHLRSRQQDKIYVGEDARNVTVLAKTKFSQDFSTFAAEIQETITALREQINKLEARLRQAGCTDVRGVPRKAEERWMKEDCTHCICESGQVTCVVEICPPAPCPSPELVKGTCCPVCRDRGMPSDSPEKR.

The N-terminal stretch at 1-23 is a signal peptide; the sequence is MEPRLFCWTTLFLLAGWCLPGLP. The 27-residue stretch at 24–50 folds into the LRRNT domain; it reads CPSRCLCFKSTVRCMHLMLDHIPQVPQ. 5 LRR repeats span residues 51–72, 75–96, 99–120, 123–144, and 147–168; these read QTTV…AFKK, NLNT…AFEG, NLLY…TFKG, SLEH…TFGD, and RLER…SFSN. The LRRCT domain occupies 180–233; sequence NALVCDCDLMWLGELLQGFAQHGHTQAAATCEYPRRLHGRAVASVTVEEFNCQS. 4 Ig-like C2-type domains span residues 234–322, 330–414, 419–504, and 507–596; these read PRIT…AMLR, PSFV…ANII, PQFT…VQLT, and PKAL…MFLT. 5 disulfides stabilise this stretch: C255-C305, C351-C398, C440-C488, C532-C580, and C718-C734. N387 carries an N-linked (GlcNAc...) asparagine glycan. The active-site Proton acceptor is H812. D813 contributes to the Ca(2+) binding site. Disulfide bonds link C832–C842 and C836–C859. Ca(2+) is bound by residues T891, Y893, D895, and S897. C944 and C953 are oxidised to a cystine. H1057 is a binding site for heme b. Intrachain disulfides connect C1160–C1217 and C1258–C1284. The 59-residue stretch at 1393–1451 folds into the VWFC domain; the sequence is AGCTDVRGVPRKAEERWMKEDCTHCICESGQVTCVVEICPPAPCPSPELVKGTCCPVCR.

It belongs to the peroxidase family. XPO subfamily. Interacts with PXDN; this interaction inhibits the peroxidase activity of PXDN. Requires heme b as cofactor. In terms of processing, phosphorylation by SRC on tyrosine residues is required for targeting to polysomes. The 57 kDa isoform PMR1 is the only form detected at protein levels in human cell lines. Expressed in heart.

The protein resides in the secreted. The protein localises to the endoplasmic reticulum. It is found in the cell membrane. It localises to the cytoplasm. In terms of biological role, probable oxidoreductase. Lacks peroxidase activity. Inhibits the peroxidase activity of PXDN through its interaction. Functionally, endonuclease selectively degrading some target mRNAs while they are engaged by translating ribosomes, among which albumin and beta-globin mRNAs. In Homo sapiens (Human), this protein is Probable oxidoreductase PXDNL.